The sequence spans 80 residues: MGMRMMFTVFLSVVLATTVVSTPSDRASDGRNAAVHERQKELVPSVITTCCGYDPGTMCPPCRCTNSCPTKPKKPGRRND.

Residues 1 to 21 (MGMRMMFTVFLSVVLATTVVS) form the signal peptide. Residues 22 to 38 (TPSDRASDGRNAAVHER) constitute a propeptide that is removed on maturation. A Pyrrolidone carboxylic acid modification is found at glutamine 39. O-linked (HexNAc...) serine glycosylation occurs at serine 45. Proline 55, proline 60, proline 61, proline 69, proline 72, and proline 75 each carry 4-hydroxyproline. At proline 75 the chain carries Proline amide. A propeptide spanning residues 76–80 (GRRND) is cleaved from the precursor.

It belongs to the conotoxin A superfamily. Contains 3 disulfide bonds. In terms of processing, O-linked glycan consists of Hex3-HexNAc2 pentasaccharide. As to expression, expressed by the venom duct.

It is found in the secreted. Its function is as follows. Neurotoxin with probable activity on sodium channel. Induces intense repetitive firing of the frog neuromuscular junction, leading to a tetanic contracture in muscle fiber (spastic paralysis). In vivo, shows the same effect as the whole venom when injected on fish prey. This Conus striatus (Striated cone) protein is Conotoxin SIVB.